The following is a 765-amino-acid chain: Cyanobacterial phytochrome A (765 aa).

The segment at 20 to 510 (IHLSGQIQPH…RKAIVNIVLR (491 aa)) is chromophore binding domain. A GAF domain is found at 152-320 (NLRDFCQIIV…VIFAEISARE (169 aa)). A tetrapyrrole is bound at residue cysteine 259. One can recognise a Histidine kinase domain in the interval 535–748 (VASHDLQEPL…TFYFTIPVGG (214 aa)). Phosphohistidine; by autocatalysis is present on histidine 538.

This sequence in the N-terminal section; belongs to the phytochrome family. Contains one covalently linked tetrapyrrole chromophore.

The catalysed reaction is ATP + protein L-histidine = ADP + protein N-phospho-L-histidine.. Functionally, photoreceptor which exists in two forms that are reversibly interconvertible by light: the R form that absorbs maximally in the red region of the spectrum and the FR form that absorbs maximally in the far-red region. This chain is Cyanobacterial phytochrome A (aphA), found in Nostoc sp. (strain PCC 7120 / SAG 25.82 / UTEX 2576).